A 37-amino-acid polypeptide reads, in one-letter code: MKVKPSVKKICGVCKVIRRNGRVAVLCSNPRHKQRQG.

Belongs to the bacterial ribosomal protein bL36 family.

The protein is Large ribosomal subunit protein bL36 of Tropheryma whipplei (strain Twist) (Whipple's bacillus).